The primary structure comprises 560 residues: Potassium-transporting ATPase potassium-binding subunit (560 aa).

Helical transmembrane passes span 6 to 26, 63 to 83, 132 to 152, 175 to 195, 250 to 270, 282 to 302, 327 to 347, 356 to 376, 379 to 399, 416 to 436, 483 to 503, and 524 to 544; these read FLLI…LGSL, LLAI…ILMC, GLAV…FALI, LWVL…QGAI, LTNV…CFAF, AILW…MWAE, FGIL…CGAV, ALGG…FGGV, GLYG…LMIG, MTAL…ALAM, LLLA…VMAI, and GALF…LTFI.

This sequence belongs to the KdpA family. As to quaternary structure, the system is composed of three essential subunits: KdpA, KdpB and KdpC.

The protein resides in the cell inner membrane. Part of the high-affinity ATP-driven potassium transport (or Kdp) system, which catalyzes the hydrolysis of ATP coupled with the electrogenic transport of potassium into the cytoplasm. This subunit binds the periplasmic potassium ions and delivers the ions to the membrane domain of KdpB through an intramembrane tunnel. The polypeptide is Potassium-transporting ATPase potassium-binding subunit (Cronobacter sakazakii (strain ATCC BAA-894) (Enterobacter sakazakii)).